Here is a 208-residue protein sequence, read N- to C-terminus: Probable GTP-binding protein EngB (208 aa).

The EngB-type G domain occupies 23–205 (LTSEMVILGR…RQTLLKYLLT (183 aa)). Residues 31–38 (GRSNVGKS), 57–61 (GKTRL), 84–87 (DLPG), 154–157 (TKFD), and 182–184 (FNA) contribute to the GTP site. Mg(2+) contacts are provided by Ser38 and Thr59.

This sequence belongs to the TRAFAC class TrmE-Era-EngA-EngB-Septin-like GTPase superfamily. EngB GTPase family. Requires Mg(2+) as cofactor.

Necessary for normal cell division and for the maintenance of normal septation. The chain is Probable GTP-binding protein EngB from Helicobacter pylori (strain Shi470).